A 130-amino-acid chain; its full sequence is Small ribosomal subunit protein uS8x (130 aa).

It belongs to the universal ribosomal protein uS8 family.

The protein is Small ribosomal subunit protein uS8x (RPS15AD) of Arabidopsis thaliana (Mouse-ear cress).